Consider the following 235-residue polypeptide: Small ribosomal subunit protein uS3 (235 aa).

One can recognise a KH type-2 domain in the interval 39–107 (VRQFLNKELA…PAQINIAEVK (69 aa)). Low complexity predominate over residues 215-226 (AQQPEQQPATPK). Residues 215-235 (AQQPEQQPATPKKAPRGKGRK) form a disordered region.

It belongs to the universal ribosomal protein uS3 family. In terms of assembly, part of the 30S ribosomal subunit. Forms a tight complex with proteins S10 and S14.

In terms of biological role, binds the lower part of the 30S subunit head. Binds mRNA in the 70S ribosome, positioning it for translation. The polypeptide is Small ribosomal subunit protein uS3 (Histophilus somni (strain 129Pt) (Haemophilus somnus)).